A 154-amino-acid polypeptide reads, in one-letter code: Immunity protein YwqK (154 aa).

Probably interacts with cognate toxin YwqJ but not with other non-cognate LXG toxins. The interaction inhibits the toxic activity of YwqJ.

Its subcellular location is the cytoplasm. Its function is as follows. Immunity component of one of 6 LXG toxin-immunity modules in this strain. They promote kin selection, mediate competition in biofilms, and drive spatial segregation of different strains, indicating that LXG toxins may help avoid warfare between strains in biofilms. Mediates intercellular competition during biofilm formation; disruption of the operon disadvantages the bacteria, but overexpression of the cognate immunity protein restores growth in competition with wild-type. In situ neutralizes the toxic effect of cognate toxin YqcG. Probably neutralizes the ability to inhibit growth of cognate toxin YwqJ. Probably does not have immunity protein activity on other LXG toxins. The protein is Immunity protein YwqK (ywqK) of Bacillus subtilis (strain 168).